A 338-amino-acid chain; its full sequence is MNVFYDKDADLSLIKGKQVTIIGYGSQGHAHALNLKDSGVNVTVGLRKGGASWSKAENAGLSVKEVAEAVKGADVVMMLLPDEQIADVYAKEVHANIKQGAALAFAHGFNVHYGQVIPRADLDVIMIAPKAPGHTVRGTYSQGGGVPHLIAVAQNKSGAARDIALSYAAANGGGRAGIIETNFREETETDLFGEQAVLCGGTVELIKAGFETLVEAGYAPEMAYFECLHELKLIVDLIYEGGIANMNYSISNNAEYGEYVTGPRVVTEETKKAMKQCLTDIQTGEYAKSFILENKAGAPTLQSRRRLTAEHQIEQVGAKLRAMMPWIAKNKLVDQTKN.

Residues 1 to 181 form the KARI N-terminal Rossmann domain; the sequence is MNVFYDKDAD…GGGRAGIIET (181 aa). NADP(+)-binding positions include 24-27, Arg-47, and Ser-52; that span reads YGSQ. Residue His-107 is part of the active site. Position 133 (Gly-133) interacts with NADP(+). A KARI C-terminal knotted domain is found at 182 to 327; it reads NFREETETDL…AKLRAMMPWI (146 aa). Mg(2+) contacts are provided by Asp-190, Glu-194, Glu-226, and Glu-230. A substrate-binding site is contributed by Ser-251.

It belongs to the ketol-acid reductoisomerase family. Requires Mg(2+) as cofactor.

It catalyses the reaction (2R)-2,3-dihydroxy-3-methylbutanoate + NADP(+) = (2S)-2-acetolactate + NADPH + H(+). The catalysed reaction is (2R,3R)-2,3-dihydroxy-3-methylpentanoate + NADP(+) = (S)-2-ethyl-2-hydroxy-3-oxobutanoate + NADPH + H(+). The protein operates within amino-acid biosynthesis; L-isoleucine biosynthesis; L-isoleucine from 2-oxobutanoate: step 2/4. It participates in amino-acid biosynthesis; L-valine biosynthesis; L-valine from pyruvate: step 2/4. Functionally, involved in the biosynthesis of branched-chain amino acids (BCAA). Catalyzes an alkyl-migration followed by a ketol-acid reduction of (S)-2-acetolactate (S2AL) to yield (R)-2,3-dihydroxy-isovalerate. In the isomerase reaction, S2AL is rearranged via a Mg-dependent methyl migration to produce 3-hydroxy-3-methyl-2-ketobutyrate (HMKB). In the reductase reaction, this 2-ketoacid undergoes a metal-dependent reduction by NADPH to yield (R)-2,3-dihydroxy-isovalerate. The sequence is that of Ketol-acid reductoisomerase (NADP(+)) from Burkholderia cenocepacia (strain HI2424).